The sequence spans 364 residues: Chorismate synthase (364 aa).

NADP(+) is bound at residue Arg47. FMN is bound by residues 125–127 (RFS), Gly285, 300–304 (KPTPS), and Arg327.

This sequence belongs to the chorismate synthase family. In terms of assembly, homotetramer. FMNH2 serves as cofactor.

The enzyme catalyses 5-O-(1-carboxyvinyl)-3-phosphoshikimate = chorismate + phosphate. It functions in the pathway metabolic intermediate biosynthesis; chorismate biosynthesis; chorismate from D-erythrose 4-phosphate and phosphoenolpyruvate: step 7/7. Catalyzes the anti-1,4-elimination of the C-3 phosphate and the C-6 proR hydrogen from 5-enolpyruvylshikimate-3-phosphate (EPSP) to yield chorismate, which is the branch point compound that serves as the starting substrate for the three terminal pathways of aromatic amino acid biosynthesis. This reaction introduces a second double bond into the aromatic ring system. This chain is Chorismate synthase, found in Dehalococcoides mccartyi (strain ATCC BAA-2266 / KCTC 15142 / 195) (Dehalococcoides ethenogenes (strain 195)).